The sequence spans 968 residues: Alanine--tRNA ligase, cytoplasmic (968 aa).

ATP is bound by residues Arg77, His95, Trp176, and 214–216 (IWN). Asn216 and Asp239 together coordinate L-alanine. Gly243 is a binding site for ATP. Residues His606, His610, Cys724, and His728 each coordinate Zn(2+).

It belongs to the class-II aminoacyl-tRNA synthetase family. As to quaternary structure, monomer. It depends on Zn(2+) as a cofactor.

It is found in the cytoplasm. It catalyses the reaction tRNA(Ala) + L-alanine + ATP = L-alanyl-tRNA(Ala) + AMP + diphosphate. Its function is as follows. Catalyzes the attachment of alanine to tRNA(Ala) in a two-step reaction: alanine is first activated by ATP to form Ala-AMP and then transferred to the acceptor end of tRNA(Ala). Also edits incorrectly charged tRNA(Ala) via its editing domain. The protein is Alanine--tRNA ligase, cytoplasmic of Caenorhabditis elegans.